A 620-amino-acid polypeptide reads, in one-letter code: Chaperone protein HscA homolog (620 aa).

This sequence belongs to the heat shock protein 70 family.

Its function is as follows. Chaperone involved in the maturation of iron-sulfur cluster-containing proteins. Has a low intrinsic ATPase activity which is markedly stimulated by HscB. The chain is Chaperone protein HscA homolog from Bordetella pertussis (strain Tohama I / ATCC BAA-589 / NCTC 13251).